A 122-amino-acid chain; its full sequence is uncharacterized protein (122 aa).

This is an uncharacterized protein from Rickettsia conorii (strain ATCC VR-613 / Malish 7).